The primary structure comprises 100 residues: Small ribosomal subunit protein uS14 (100 aa).

Belongs to the universal ribosomal protein uS14 family. In terms of assembly, part of the 30S ribosomal subunit. Contacts proteins S3 and S10.

In terms of biological role, binds 16S rRNA, required for the assembly of 30S particles and may also be responsible for determining the conformation of the 16S rRNA at the A site. The chain is Small ribosomal subunit protein uS14 from Synechococcus sp. (strain CC9311).